A 602-amino-acid polypeptide reads, in one-letter code: Aspartate--tRNA(Asp/Asn) ligase (602 aa).

Glu176 contacts L-aspartate. An aspartate region spans residues 200–203; that stretch reads QQFK. Residues Arg222 and His452 each coordinate L-aspartate. 222 to 224 contacts ATP; it reads RDE. Glu490 is an ATP binding site. Arg497 provides a ligand contact to L-aspartate. Residue 542-545 participates in ATP binding; the sequence is GIDR.

It belongs to the class-II aminoacyl-tRNA synthetase family. Type 1 subfamily. Homodimer.

It localises to the cytoplasm. The enzyme catalyses tRNA(Asx) + L-aspartate + ATP = L-aspartyl-tRNA(Asx) + AMP + diphosphate. Aspartyl-tRNA synthetase with relaxed tRNA specificity since it is able to aspartylate not only its cognate tRNA(Asp) but also tRNA(Asn). Reaction proceeds in two steps: L-aspartate is first activated by ATP to form Asp-AMP and then transferred to the acceptor end of tRNA(Asp/Asn). This is Aspartate--tRNA(Asp/Asn) ligase from Rickettsia africae (strain ESF-5).